Consider the following 654-residue polypeptide: Carboxypeptidase Z (654 aa).

A signal peptide spans 1-20 (MPTMPLLLAALAALAVLALA). An FZ domain is found at 43–165 (THSATCVDLH…APEEEGCYDP (123 aa)). Intrachain disulfides connect cysteine 48–cysteine 114, cysteine 56–cysteine 107, cysteine 98–cysteine 134, cysteine 123–cysteine 162, and cysteine 127–cysteine 151. N-linked (GlcNAc...) asparagine glycosylation occurs at asparagine 62. One can recognise a Peptidase M14 domain in the interval 191-507 (AHHSYAQMVR…EPLLNFLEMV (317 aa)). The Zn(2+) site is built by histidine 253 and glutamate 256. Asparagine 286 is a glycosylation site (N-linked (GlcNAc...) asparagine). Histidine 385 serves as a coordination point for Zn(2+). The Proton donor/acceptor role is filled by glutamate 477. Positions 596–630 (FLPGPSRALPRFQDPQREPTQMDFEPPRARRQPAS) are disordered.

It belongs to the peptidase M14 family. Zn(2+) serves as cofactor.

It is found in the secreted. The protein resides in the extracellular space. It localises to the extracellular matrix. Inhibited by 2-mercaptomethyl-3-guanidinoethylthiopropanoic acid (MGTA) and guanidinoethylmercaptosuccinic acid (GEMSA). Inhibited by chelating agents such as EDTA and EGTA. Cleaves substrates with C-terminal arginine residues. Probably modulates the Wnt signaling pathway, by cleaving some undefined protein. May play a role in cleavage during prohormone processing. This chain is Carboxypeptidase Z (Cpz), found in Mus musculus (Mouse).